The sequence spans 1151 residues: ATP-dependent helicase/deoxyribonuclease subunit B (1151 aa).

Positions Met1–Glu273 constitute a UvrD-like helicase ATP-binding domain. Gly8 to Thr15 serves as a coordination point for ATP. The 297-residue stretch at Pro282–Asp578 folds into the UvrD-like helicase C-terminal domain. 4 residues coordinate [4Fe-4S] cluster: Cys788, Cys1107, Cys1110, and Cys1116.

This sequence belongs to the helicase family. AddB/RexB type 1 subfamily. Heterodimer of AddA and AddB. It depends on Mg(2+) as a cofactor. [4Fe-4S] cluster serves as cofactor.

Functionally, the heterodimer acts as both an ATP-dependent DNA helicase and an ATP-dependent, dual-direction single-stranded exonuclease. Recognizes the chi site generating a DNA molecule suitable for the initiation of homologous recombination. The AddB subunit has 5' -&gt; 3' nuclease activity but not helicase activity. The protein is ATP-dependent helicase/deoxyribonuclease subunit B of Moorella thermoacetica (strain ATCC 39073 / JCM 9320).